Here is a 674-residue protein sequence, read N- to C-terminus: DNA ligase (674 aa).

NAD(+) contacts are provided by residues 35–39 (DYDFD), 84–85 (SL), and Glu118. Catalysis depends on Lys120, which acts as the N6-AMP-lysine intermediate. The NAD(+) site is built by Arg141, Glu184, Lys297, and Lys321. The Zn(2+) site is built by Cys415, Cys418, Cys433, and Cys439. The BRCT domain occupies 598-674 (LVNTNFEGLT…ITEDEFDALL (77 aa)).

It belongs to the NAD-dependent DNA ligase family. LigA subfamily. Mg(2+) serves as cofactor. Requires Mn(2+) as cofactor.

The enzyme catalyses NAD(+) + (deoxyribonucleotide)n-3'-hydroxyl + 5'-phospho-(deoxyribonucleotide)m = (deoxyribonucleotide)n+m + AMP + beta-nicotinamide D-nucleotide.. DNA ligase that catalyzes the formation of phosphodiester linkages between 5'-phosphoryl and 3'-hydroxyl groups in double-stranded DNA using NAD as a coenzyme and as the energy source for the reaction. It is essential for DNA replication and repair of damaged DNA. This chain is DNA ligase, found in Chlorobium phaeovibrioides (strain DSM 265 / 1930) (Prosthecochloris vibrioformis (strain DSM 265)).